The primary structure comprises 397 residues: MGKKKFERTKPHVNVGTVGHIDHGKTTLTAAITKQLAKRGRAEFVPFDQIDKAPEERERGITIATAHVEYETDKRHYAHVDCPGHADYIKNMITGAAQMDGAILVVAADDGPMPQTREHILLSRQVGVPYIVVFLNKVDMVDDPELIELVELELRELLSKYGFPGDDVPIIKGSALRALEADDPEHPDTKCIFELMEAIDAYVPDPVRDIDKPFLMPIEDVFSISGRGTVVTGRVERGVIRVSEDVEIVGFRPTFKTVCTGVEMFRKTLDQGQAGDNVGVLLRGTKRDEVERGQVVAKPGSITPHTKFKAEVYVLKKEEGGRHTPFFPGYRPQFYFRTTDVTGIMTLPEGVEMVMPGDNISTEVHLITPVALEKELRFAIREGGRTVGAGVITEIIE.

One can recognise a tr-type G domain in the interval 10–207 (KPHVNVGTVG…AIDAYVPDPV (198 aa)). The tract at residues 19 to 26 (GHIDHGKT) is G1. 19–26 (GHIDHGKT) is a binding site for GTP. Thr26 provides a ligand contact to Mg(2+). The tract at residues 60–64 (GITIA) is G2. A G3 region spans residues 81-84 (DCPG). Residues 81–85 (DCPGH) and 136–139 (NKVD) contribute to the GTP site. The interval 136–139 (NKVD) is G4. The G5 stretch occupies residues 174-176 (SAL).

This sequence belongs to the TRAFAC class translation factor GTPase superfamily. Classic translation factor GTPase family. EF-Tu/EF-1A subfamily. As to quaternary structure, monomer.

Its subcellular location is the cytoplasm. It carries out the reaction GTP + H2O = GDP + phosphate + H(+). Its function is as follows. GTP hydrolase that promotes the GTP-dependent binding of aminoacyl-tRNA to the A-site of ribosomes during protein biosynthesis. In Syntrophobacter fumaroxidans (strain DSM 10017 / MPOB), this protein is Elongation factor Tu.